Consider the following 447-residue polypeptide: Phosphoglucosamine mutase (447 aa).

S100 serves as the catalytic Phosphoserine intermediate. Residues S100, D239, D241, and D243 each coordinate Mg(2+). A Phosphoserine modification is found at S100.

Belongs to the phosphohexose mutase family. It depends on Mg(2+) as a cofactor. In terms of processing, activated by phosphorylation.

The catalysed reaction is alpha-D-glucosamine 1-phosphate = D-glucosamine 6-phosphate. Catalyzes the conversion of glucosamine-6-phosphate to glucosamine-1-phosphate. The sequence is that of Phosphoglucosamine mutase from Thermoanaerobacter sp. (strain X514).